A 1090-amino-acid polypeptide reads, in one-letter code: Leucine--tRNA ligase, cytoplasmic (1090 aa).

Ser-2 is modified (N-acetylserine). Positions 66–76 match the 'HIGH' region motif; that stretch reads PYMNGVMHAGH. Thr-142 is modified (phosphothreonine). Residues 729-733 carry the 'KMSKS' region motif; the sequence is KMSKS. Residue Lys-732 coordinates ATP.

This sequence belongs to the class-I aminoacyl-tRNA synthetase family.

It is found in the cytoplasm. It catalyses the reaction tRNA(Leu) + L-leucine + ATP = L-leucyl-tRNA(Leu) + AMP + diphosphate. This chain is Leucine--tRNA ligase, cytoplasmic (CDC60), found in Saccharomyces cerevisiae (strain ATCC 204508 / S288c) (Baker's yeast).